Here is a 67-residue protein sequence, read N- to C-terminus: Neurotoxin Cex10 (67 aa).

Residues Lys-1 to Gly-65 enclose the LCN-type CS-alpha/beta domain. 4 disulfides stabilise this stretch: Cys-11–Cys-64, Cys-15–Cys-40, Cys-24–Cys-45, and Cys-28–Cys-47. Residue Cys-64 is modified to Cysteine amide. The propeptide occupies Gly-65–Lys-67.

This sequence belongs to the long (4 C-C) scorpion toxin superfamily. Sodium channel inhibitor family. Beta subfamily. In terms of tissue distribution, expressed by the venom gland.

It localises to the secreted. In terms of biological role, beta toxins bind voltage-independently at site-4 of sodium channels (Nav) and shift the voltage of activation toward more negative potentials thereby affecting sodium channel activation and promoting spontaneous and repetitive firing. This Centruroides exilicauda (Bark scorpion) protein is Neurotoxin Cex10.